The sequence spans 325 residues: Cytochrome c1, heme protein, mitochondrial (325 aa).

The N-terminal 84 residues, methionine 1–alanine 84, are a transit peptide targeting the mitochondrion. The Mitochondrial intermembrane portion of the chain corresponds to serine 85–glutamate 281. One can recognise a Cytochrome c domain in the interval threonine 108–aspartate 209. Heme c is bound by residues cysteine 121, cysteine 124, histidine 125, and methionine 244. A helical transmembrane segment spans residues histidine 282 to lysine 315. Residues serine 316–lysine 325 are Mitochondrial matrix-facing.

Belongs to the cytochrome c family. In terms of assembly, component of the ubiquinol-cytochrome c oxidoreductase (cytochrome b-c1 complex, complex III, CIII), a multisubunit enzyme composed of 11 subunits. The complex is composed of 3 respiratory subunits cytochrome b, cytochrome c1 and Rieske protein UQCRFS1, 2 core protein subunits UQCRC1/QCR1 and UQCRC2/QCR2, and 6 low-molecular weight protein subunits UQCRH/QCR6, UQCRB/QCR7, UQCRQ/QCR8, UQCR10/QCR9, UQCR11/QCR10 and subunit 9, the cleavage product of Rieske protein UQCRFS1. The complex exists as an obligatory dimer and forms supercomplexes (SCs) in the inner mitochondrial membrane with NADH-ubiquinone oxidoreductase (complex I, CI) and cytochrome c oxidase (complex IV, CIV), resulting in different assemblies (supercomplex SCI(1)III(2)IV(1) and megacomplex MCI(2)III(2)IV(2)). Interacts with FLVCR2; this interaction occurs in the absence of heme and is disrupted upon heme binding. The cofactor is heme c.

Its subcellular location is the mitochondrion inner membrane. It catalyses the reaction a quinol + 2 Fe(III)-[cytochrome c](out) = a quinone + 2 Fe(II)-[cytochrome c](out) + 2 H(+)(out). Functionally, component of the ubiquinol-cytochrome c oxidoreductase, a multisubunit transmembrane complex that is part of the mitochondrial electron transport chain which drives oxidative phosphorylation. The respiratory chain contains 3 multisubunit complexes succinate dehydrogenase (complex II, CII), ubiquinol-cytochrome c oxidoreductase (cytochrome b-c1 complex, complex III, CIII) and cytochrome c oxidase (complex IV, CIV), that cooperate to transfer electrons derived from NADH and succinate to molecular oxygen, creating an electrochemical gradient over the inner membrane that drives transmembrane transport and the ATP synthase. The cytochrome b-c1 complex catalyzes electron transfer from ubiquinol to cytochrome c, linking this redox reaction to translocation of protons across the mitochondrial inner membrane, with protons being carried across the membrane as hydrogens on the quinol. In the process called Q cycle, 2 protons are consumed from the matrix, 4 protons are released into the intermembrane space and 2 electrons are passed to cytochrome c. Cytochrome c1 is a catalytic core subunit containing a c-type heme. It transfers electrons from the [2Fe-2S] iron-sulfur cluster of the Rieske protein to cytochrome c. The protein is Cytochrome c1, heme protein, mitochondrial (CYC1) of Bos taurus (Bovine).